A 273-amino-acid polypeptide reads, in one-letter code: Dermonecrotic toxin LapSicTox-alphaIB2 (273 aa).

Residue H5 is part of the active site. Positions 25 and 27 each coordinate Mg(2+). H41 serves as the catalytic Nucleophile. Disulfide bonds link C45/C51 and C47/C190. D85 lines the Mg(2+) pocket. The N-linked (GlcNAc...) asparagine glycan is linked to N250.

The protein belongs to the arthropod phospholipase D family. Class II subfamily. It depends on Mg(2+) as a cofactor. Expressed by the venom gland.

The protein localises to the secreted. The enzyme catalyses an N-(acyl)-sphingosylphosphocholine = an N-(acyl)-sphingosyl-1,3-cyclic phosphate + choline. It carries out the reaction an N-(acyl)-sphingosylphosphoethanolamine = an N-(acyl)-sphingosyl-1,3-cyclic phosphate + ethanolamine. The catalysed reaction is a 1-acyl-sn-glycero-3-phosphocholine = a 1-acyl-sn-glycero-2,3-cyclic phosphate + choline. It catalyses the reaction a 1-acyl-sn-glycero-3-phosphoethanolamine = a 1-acyl-sn-glycero-2,3-cyclic phosphate + ethanolamine. In terms of biological role, dermonecrotic toxins cleave the phosphodiester linkage between the phosphate and headgroup of certain phospholipids (sphingolipid and lysolipid substrates), forming an alcohol (often choline) and a cyclic phosphate. This toxin acts on sphingomyelin (SM). It may also act on ceramide phosphoethanolamine (CPE), lysophosphatidylcholine (LPC) and lysophosphatidylethanolamine (LPE), but not on lysophosphatidylserine (LPS), and lysophosphatidylglycerol (LPG). It acts by transphosphatidylation, releasing exclusively cyclic phosphate products as second products. Induces dermonecrosis, hemolysis, increased vascular permeability, edema, inflammatory response, and platelet aggregation. This is Dermonecrotic toxin LapSicTox-alphaIB2 from Loxosceles apachea (Apache recluse spider).